Consider the following 1137-residue polypeptide: Calcium-activated potassium channel subunit alpha-1 (1137 aa).

The Extracellular segment spans residues methionine 1 to methionine 44. The chain crosses the membrane as a helical span at residues tryptophan 45–leucine 65. Residues tryptophan 66 to arginine 137 are Cytoplasmic-facing. A helical membrane pass occupies residues valine 138–serine 158. The Extracellular segment spans residues serine 159 to threonine 173. Residues leucine 174 to alanine 194 traverse the membrane as a helical segment. Topologically, residues alanine 195 to lysine 198 are cytoplasmic. A helical membrane pass occupies residues leucine 199–valine 219. Residues serine 220–leucine 223 lie on the Extracellular side of the membrane. Residues asparagine 224–isoleucine 244 form a helical; Voltage-sensor membrane-spanning segment. The Cytoplasmic segment spans residues leucine 245–leucine 259. A helical transmembrane segment spans residues valine 260–valine 280. The Extracellular segment spans residues glutamate 281–glutamine 294. Positions glutamine 295–valine 317 form an intramembrane region, pore-forming. Positions threonine 311–tyrosine 314 match the Selectivity for potassium motif. The Extracellular portion of the chain corresponds to tyrosine 318–leucine 326. Residues phenylalanine 327–isoleucine 347 traverse the membrane as a helical segment. Topologically, residues glutamate 348 to leucine 1137 are cytoplasmic. An RCK N-terminal 1 domain is found at arginine 366–isoleucine 508. Mg(2+) is bound by residues glutamate 398, glutamine 421, and glutamate 423. The segment at leucine 515–phenylalanine 535 is segment S7. The interval leucine 572 to isoleucine 592 is segment S8. Residues cysteine 636–histidine 640 are heme-binding motif. The segment at glutamate 660–arginine 688 is disordered. A segment S9 region spans residues valine 738–leucine 758. The RCK N-terminal 2 domain occupies serine 740 to proline 884. The Calcium bowl motif lies at threonine 904–glutamate 926. Residues glutamine 913, aspartate 916, aspartate 919, and aspartate 921 each contribute to the Ca(2+) site. A segment S10 region spans residues phenylalanine 933 to phenylalanine 953. Low complexity predominate over residues alanine 1088–serine 1112. Residues alanine 1088–leucine 1137 form a disordered region. The span at lysine 1121–leucine 1137 shows a compositional bias: basic and acidic residues.

The protein belongs to the potassium channel family. Calcium-activated (TC 1.A.1.3) subfamily. KCa1.1/KCNMA1 sub-subfamily. As to quaternary structure, homotetramer; which constitutes the calcium-activated potassium channel.

It is found in the cell membrane. The enzyme catalyses K(+)(in) = K(+)(out). With respect to regulation, ethanol and carbon monoxide-bound heme increase channel activation. Heme inhibits channel activation. In terms of biological role, potassium channel activated by both membrane depolarization or increase in cytosolic Ca(2+) that mediates export of K(+). It is also activated by the concentration of cytosolic Mg(2+). Its activation dampens the excitatory events that elevate the cytosolic Ca(2+) concentration and/or depolarize the cell membrane. It therefore contributes to repolarization of the membrane potential. Plays a key role in controlling excitability in a number of systems, such as regulation of the contraction of smooth muscle, the tuning of hair cells in the cochlea, regulation of transmitter release, and innate immunity. In smooth muscles, its activation by high level of Ca(2+), caused by ryanodine receptors in the sarcoplasmic reticulum, regulates the membrane potential. In cochlea cells, its number and kinetic properties partly determine the characteristic frequency of each hair cell and thereby helps to establish a tonotopic map. Highly sensitive to both iberiotoxin (IbTx) and charybdotoxin (CTX). This Gallus gallus (Chicken) protein is Calcium-activated potassium channel subunit alpha-1 (KCNMA1).